Consider the following 384-residue polypeptide: Zinc transporter 7 (384 aa).

A signal peptide spans 1–25 (MERFVQFLRRGNGLMAASLAAGSCA). Residues 26–46 (EEVAKAEGAGCRDDAAALRLK) are Extracellular-facing. A helical membrane pass occupies residues 47 to 67 (GVAMATILVAGVVGVGLPLAG). Residues 68-79 (RKRRALRTDSAA) lie on the Cytoplasmic side of the membrane. The chain crosses the membrane as a helical span at residues 80-100 (FVAAKAFAAGVILATGFVHML). At 101-119 (HDAEHALSSPCLPAHPWRS) the chain is on the extracellular side. The helical transmembrane segment at 120–140 (FPFPGFVAMSAALATLVLDFL) threads the bilayer. At 141-227 (ATRFYEGKHR…GEGEVPAQVR (87 aa)) the chain is on the cytoplasmic side. A disordered region spans residues 185–222 (DNKAPLLQPHSHSHSHPHGHGHGHELAQPEGSGGEGEV). Residues 195-205 (SHSHSHPHGHG) show a composition bias toward basic residues. Residues 228–248 (SVVVSQILEMGIVSHSVIIGL) form a helical membrane-spanning segment. At 249–261 (SLGVSRSPCTIRP) the chain is on the extracellular side. The helical transmembrane segment at 262–282 (LVAALSFHQFFEGFALGGCIA) threads the bilayer. Topologically, residues 283–291 (QAQFKTLSA) are cytoplasmic. The helical transmembrane segment at 292 to 312 (AIMACFFAITTPAGIAAGAGV) threads the bilayer. Residues 313–323 (ASFYNANSPRA) are Extracellular-facing. Residues 324–344 (LVVEGILDSVSAGILIYMSLV) traverse the membrane as a helical segment. At 345–363 (DLIAADFLGGKMTGSTRQQ) the chain is on the cytoplasmic side. The chain crosses the membrane as a helical span at residues 364–384 (VMAYIALFLGALSMSSLAIWA).

Belongs to the ZIP transporter (TC 2.A.5) family.

Its subcellular location is the cell membrane. Functionally, zinc transporter that may be involved in zinc uptake from the rhizosphere. The sequence is that of Zinc transporter 7 (ZIP7) from Oryza sativa subsp. japonica (Rice).